The chain runs to 186 residues: GTP cyclohydrolase 1 1 (186 aa).

The protein belongs to the GTP cyclohydrolase I family. In terms of assembly, homomer.

The enzyme catalyses GTP + H2O = 7,8-dihydroneopterin 3'-triphosphate + formate + H(+). It participates in cofactor biosynthesis; 7,8-dihydroneopterin triphosphate biosynthesis; 7,8-dihydroneopterin triphosphate from GTP: step 1/1. This chain is GTP cyclohydrolase 1 1 (folE1), found in Pseudomonas aeruginosa (strain ATCC 15692 / DSM 22644 / CIP 104116 / JCM 14847 / LMG 12228 / 1C / PRS 101 / PAO1).